A 161-amino-acid polypeptide reads, in one-letter code: Insulin-like growth factor 1, juvenile form (161 aa).

Residues glycine 45 to threonine 73 form a b region. 3 disulfides stabilise this stretch: cysteine 50/cysteine 92, cysteine 62/cysteine 105, and cysteine 91/cysteine 96. A c region spans residues glycine 74 to arginine 85. An a region spans residues glycine 86–alanine 106. Residues proline 107–proline 114 are d. Residues glycine 111–isoleucine 161 form a disordered region. The propeptide at arginine 115–isoleucine 161 is e peptide.

The protein belongs to the insulin family.

The protein localises to the secreted. Its function is as follows. The insulin-like growth factors, isolated from plasma, are structurally and functionally related to insulin but have a much higher growth-promoting activity. Acts as a ligand for IGF1R. Binds to the alpha subunit of IGF1R, leading to the activation of the intrinsic tyrosine kinase activity which autophosphorylates tyrosine residues in the beta subunit thus initiatiating a cascade of down-stream signaling events leading to activation of the PI3K-AKT/PKB and the Ras-MAPK pathways. Binds to integrins. Its binding to integrins and subsequent ternary complex formation with integrins and IGFR1 are essential for IGF1 signaling. The protein is Insulin-like growth factor 1, juvenile form of Cyprinus carpio (Common carp).